A 344-amino-acid chain; its full sequence is Ubiquitin-associated domain-containing protein 2 (344 aa).

The signal sequence occupies residues 1-34 (MFTSTGSNGLYKAPLSKSLLLVPSAISILLTLLF). Topologically, residues 35-91 (QHYQKFFAYNLQAIKEDFQIWRLVCGRVICLDLKDTFCSSLLIYNFRIFERRYGSRK) are extracellular. A helical membrane pass occupies residues 92 to 111 (FSSFLLGAWTLSALFDLLLV). The Cytoplasmic segment spans residues 112-123 (EAAQYVFGITIN). A helical membrane pass occupies residues 124–142 (SLPSGFLGPVFALFVPFYC). The Extracellular segment spans residues 143-162 (SIPRVQVTQVLGYFSITNKT). Asn-160 carries an N-linked (GlcNAc...) asparagine glycan. The chain crosses the membrane as a helical span at residues 163–183 (LVYILGLQLLTSGSYIWILAL). Residues 184 to 344 (SGLISGICYN…NVATNFLLQH (161 aa)) are Cytoplasmic-facing. The tract at residues 284–307 (RHNENYQDHHPSDQDTPPPTEVSE) is disordered. Over residues 286 to 296 (NENYQDHHPSD) the composition is skewed to basic and acidic residues. In terms of domain architecture, UBA spans 304–344 (EVSEEQVARLMEMGFSRGDALEALRASNNDLNVATNFLLQH).

The protein localises to the endoplasmic reticulum membrane. Functionally, restricts trafficking of FAF2 from the endoplasmic reticulum to lipid droplets. May negatively regulate the canonical Wnt signaling pathway in the lymphocytes. In Gallus gallus (Chicken), this protein is Ubiquitin-associated domain-containing protein 2 (UBAC2).